We begin with the raw amino-acid sequence, 228 residues long: Early nodulin-like protein 18 (228 aa).

The N-terminal stretch at methionine 1–alanine 26 is a signal peptide. In terms of domain architecture, Phytocyanin spans lysine 28 to histidine 148. 4 N-linked (GlcNAc...) asparagine glycosylation sites follow: asparagine 29, asparagine 71, asparagine 94, and asparagine 145. Cysteine 86 and cysteine 136 are disulfide-bonded. Residues histidine 148 to threonine 211 form a disordered region. Over residues proline 153–serine 170 the composition is skewed to low complexity. Over residues aspartate 188 to serine 204 the composition is skewed to basic and acidic residues. Serine 204 carries the GPI-anchor amidated serine lipid modification. The propeptide at lysine 205–phenylalanine 228 is removed in mature form.

Belongs to the early nodulin-like (ENODL) family. In terms of tissue distribution, mostly expressed in seedlings, roots and flowers, and, to a lower extent, in leaves, stems and seeds.

The protein localises to the cell membrane. In terms of biological role, may act as a carbohydrate transporter. This Arabidopsis thaliana (Mouse-ear cress) protein is Early nodulin-like protein 18.